The primary structure comprises 664 residues: Intraflagellar transport protein 70A1 (664 aa).

7 TPR repeats span residues 11–44 (DGEF…SSRS), 45–78 (RAGL…HPEL), 153–186 (PDGL…SGYQ), 188–220 (DLSY…GIRQ), 393–423 (TKQV…EKYI), 424–456 (PVLM…CNDH), and 458–491 (VWKL…NYDN). A coiled-coil region spans residues 507–534 (YIMTSQNEEAEELMRKIEKEEEQLSYGD). One copy of the TPR 8 repeat lies at 543–576 (CIVNLVIGTLYCAKGNYDFGISRVIKSLEPYHKK).

It belongs to the TTC30/dfy-1/fleer family. Interacts wit the IFT B complex component IFT52.

The protein resides in the cell projection. The protein localises to the cilium. Required for polyglutamylation of axonemal tubulin. Plays a role in anterograde intraflagellar transport (IFT), the process by which cilia precursors are transported from the base of the cilium to the site of their incorporation at the tip. This is Intraflagellar transport protein 70A1 (Ift70a1) from Mus musculus (Mouse).